The primary structure comprises 103 residues: Large ribosomal subunit protein bL21 (103 aa).

This sequence belongs to the bacterial ribosomal protein bL21 family. In terms of assembly, part of the 50S ribosomal subunit. Contacts protein L20.

This protein binds to 23S rRNA in the presence of protein L20. The chain is Large ribosomal subunit protein bL21 from Aromatoleum aromaticum (strain DSM 19018 / LMG 30748 / EbN1) (Azoarcus sp. (strain EbN1)).